We begin with the raw amino-acid sequence, 365 residues long: Putative nudix hydrolase 1 (365 aa).

A Nudix hydrolase domain is found at 72 to 201; sequence VNYVAAAIIL…DFIRLVDEAV (130 aa). A Nudix box motif is present at residues 109 to 130; sequence GRVEAGETIEEAVVREVKEETG. Mg(2+) is bound by residues glutamate 124 and glutamate 128.

Belongs to the Nudix hydrolase family. It depends on Mg(2+) as a cofactor. Mn(2+) is required as a cofactor.

Functionally, probably mediates the hydrolysis of some nucleoside diphosphate derivatives. The polypeptide is Putative nudix hydrolase 1 (ndx-1) (Caenorhabditis elegans).